The following is a 154-amino-acid chain: MVEKKPAVRSQDPGQRRVLDRAARQRRINRQLEALENDNFQDDPHAGLPQLGKRLPQFDDDADTGKKKKKTRGDHFKLRFRKNFQALLEEQNLSASEGPNYLTACAGPPSRPQRPFCAVCGFPSPYTCVSCGARYCTVRCLGTHQETRCLKWTV.

The disordered stretch occupies residues 1–73 (MVEKKPAVRS…TGKKKKKTRG (73 aa)). Positions 14–23 (GQRRVLDRAA) are enriched in basic and acidic residues. Residues 23–39 (ARQRRINRQLEALENDN) are a coiled coil. The Nuclear localization signal signature appears at 38 to 47 (DNFQDDPHAG). The interaction with NR1D2 stretch occupies residues 72-110 (RGDHFKLRFRKNFQALLEEQNLSASEGPNYLTACAGPPS). A Phosphothreonine; by MAPK11 and MAPK14 modification is found at threonine 103. Residues cysteine 117, cysteine 120, cysteine 128, cysteine 131, cysteine 136, cysteine 140, histidine 144, and cysteine 149 each contribute to the Zn(2+) site. An HIT-type zinc finger spans residues 117–149 (CAVCGFPSPYTCVSCGARYCTVRCLGTHQETRC).

This sequence belongs to the ZNHIT1 family. As to quaternary structure, component of the chromatin-remodeling SRCAP complex composed of at least SRCAP, DMAP1, RUVBL1, RUVBL2, ACTL6A, YEATS4, ACTR6 and ZNHIT1. Interacts with MAPK11 and MAPK14. Interacts with NR1D1 and NR2D2. Interacts (via HIT-type zinc finger) with the RUVBL1/RUVBL2 complex in the presence of ADP. Interacts with histone deacetylase HDAC1. Interacts with histone H2AZ1; the interaction results in recruitment of H2AZ1 to the MYOG promoter region. Interacts with PCID2; the interaction results in inhibition of SRCAP complex activity, preventing the deposition of histone variant H2AZ1 to lymphoid fate regulator genes and restricting lymphoid lineage commitment. In terms of processing, phosphorylated on Thr by MAPK11 or MAPK14. Phosphorylation is required for MYOG induction, for deposition of histone H2AZ1 at the MYOG promoter and for SRCAP complex integrity. As to expression, higher expression in testis than in other tissues (at protein level). Expressed in the lens (at protein level). In the intestinal epithelium, expression is enriched at the bottom of crypts. In hematopoietic cells, enriched in hematopoietic stem cells and progenitors with significantly reduced expression in differentiated cells such as granulocytes, monocytes, T cells and B cells.

The protein resides in the nucleus. In terms of biological role, plays a role in chromatin remodeling by promoting the incorporation of histone variant H2AZ1/H2A.Z into the genome to regulate gene expression. Promotes SRCAP complex-mediated deposition of histone variant H2AZ1 to lymphoid fate regulator genes, enhancing lymphoid lineage commitment. Recruited to the promoter of the transcriptional activator MYOG at the early stages of muscle differentiation where it mediates binding of histone variant H2AZ1 to chromatin and induces muscle-specific gene expression. Maintains hematopoietic stem cell (HSC) quiescence by determining the chromatin accessibility at distal enhancers of HSC quiescence genes such as PTEN, FSTL1 and KLF4, enhancing deposition of H2AZ1 to promote their sustained transcription and restricting PI3K-AKT signaling inhibition. Plays a role in intestinal stem cell maintenance by promoting H2AZ1 deposition at the transcription start sites of genes involved in intestinal stem cell fate determination including LGR5, TGFB1 and TGFBR2, thereby contributing to gene transcription. Promotes phosphorylation of the H2AZ1 chaperone VPS72/YL1 which enhances the interaction between HZAZ1 and VPS72. Regulates the entry of male germ cells into meiosis by controlling histone H2AZ1 deposition which facilitates the expression of meiotic genes such as MEIOSIN, leading to the initiation of meiosis. Required for postnatal heart function through its role in maintenance of cardiac Ca(2+) homeostasis by modulating the expression of Ca(2+)-regulating proteins CASQ1 and ATP2A2/SERCA2A via deposition of histone H2AZ1 at their promoters. During embryonic heart development, required for mitochondrial maturation and oxidative metabolism by functioning through H2AZ1 deposition to activate transcription of metabolic genes and is also required to maintain the stability of the respiratory complex. In neural cells, increases deposition of the H2AZ1 histone variant and promotes neurite growth. Plays a role in TP53/p53-mediated apoptosis induction by stimulating the transcriptional activation of several proapoptotic p53 target genes such as PMAIP1/NOXA and BBC3/PUMA. Mediates cell cycle arrest induced in response to gamma-irradiation by enhancing recruitment of TP53/p53 to the promoter of the cell cycle inhibitor CDKN1A, leading to its transcriptional activation. Recruited to the promoter of cyclin-dependent kinase CDK6 and inhibits its transcription, possibly by decreasing the acetylation level of histone H4, leading to cell cycle arrest at the G1 phase. Plays a role in lens fiber cell differentiation by regulating the expression of cell cycle regulator CDKN1A/p21Cip1. Binds to transcriptional repressor NR1D2 and relieves it of its inhibitory effect on the transcription of apolipoprotein APOC3 without affecting its DNA-binding activity. The chain is Zinc finger HIT domain-containing protein 1 (Znhit1) from Mus musculus (Mouse).